The following is a 406-amino-acid chain: Argininosuccinate synthase (406 aa).

Residues 13-21 and A40 each bind ATP; that span reads AYSGGLDTS. L-citrulline-binding residues include Y91 and S96. ATP is bound at residue G121. T123, N127, and D128 together coordinate L-aspartate. N127 lines the L-citrulline pocket. Residues R131, S182, S191, E267, and Y279 each contribute to the L-citrulline site.

Belongs to the argininosuccinate synthase family. Type 1 subfamily. In terms of assembly, homotetramer.

The protein resides in the cytoplasm. It carries out the reaction L-citrulline + L-aspartate + ATP = 2-(N(omega)-L-arginino)succinate + AMP + diphosphate + H(+). It participates in amino-acid biosynthesis; L-arginine biosynthesis; L-arginine from L-ornithine and carbamoyl phosphate: step 2/3. In Brucella anthropi (strain ATCC 49188 / DSM 6882 / CCUG 24695 / JCM 21032 / LMG 3331 / NBRC 15819 / NCTC 12168 / Alc 37) (Ochrobactrum anthropi), this protein is Argininosuccinate synthase.